Here is a 100-residue protein sequence, read N- to C-terminus: Large ribosomal subunit protein eL30 (100 aa).

Belongs to the eukaryotic ribosomal protein eL30 family.

This is Large ribosomal subunit protein eL30 (rpl30e) from Aeropyrum pernix (strain ATCC 700893 / DSM 11879 / JCM 9820 / NBRC 100138 / K1).